A 95-amino-acid polypeptide reads, in one-letter code: Co-chaperonin GroES (95 aa).

This sequence belongs to the GroES chaperonin family. As to quaternary structure, heptamer of 7 subunits arranged in a ring. Interacts with the chaperonin GroEL.

The protein localises to the cytoplasm. In terms of biological role, together with the chaperonin GroEL, plays an essential role in assisting protein folding. The GroEL-GroES system forms a nano-cage that allows encapsulation of the non-native substrate proteins and provides a physical environment optimized to promote and accelerate protein folding. GroES binds to the apical surface of the GroEL ring, thereby capping the opening of the GroEL channel. The protein is Co-chaperonin GroES of Rickettsia felis (strain ATCC VR-1525 / URRWXCal2) (Rickettsia azadi).